Consider the following 674-residue polypeptide: Leucine-rich repeat transmembrane protein FLRT1 (674 aa).

The signal sequence occupies residues 1–51 (MVVAHSAATATTTPAATVTATVVMTTATMDLRDWLFLCYGLIAFLTEVIDS). The Extracellular portion of the chain corresponds to 52-552 (TTCPSVCRCD…QNAGPMAGLP (501 aa)). Intrachain disulfides connect Cys54–Cys60 and Cys58–Cys67. An LRRNT domain is found at 54–80 (CPSVCRCDNGFIYCNDRGLTSIPSDIP). LRR repeat units follow at residues 81-105 (DDAT…LKTK), 106-126 (VKVQ…INLP), 127-149 (RSLR…SLAR), 151-175 (PLLE…AFAD), 176-197 (SKQL…SGLP), 198-220 (HTLE…AFKG), 222-246 (NSLR…TFSR), 247-269 (LQNL…NLPS), 270-292 (AHLQ…TLAK), and 293-316 (MREL…LFDD). Residue Asn305 is glycosylated (N-linked (GlcNAc...) asparagine). The LRRCT domain occupies 328–379 (NPWFCGCNLMWLRDWVRARAAVVNVRGLMCQGPEKVRGMAIKDITSEMDECF). The cysteines at positions 332 and 357 are disulfide-linked. The Fibronectin type-III domain maps to 437–532 (KTLVIQVKPL…VCAKAETADS (96 aa)). A helical membrane pass occupies residues 553–573 (LAGIIGGAVALVFLFLVLGAI). Over 574–674 (CWYVHRAGEL…GIPDVDYSYT (101 aa)) the chain is Cytoplasmic. Phosphotyrosine is present on residues Tyr600, Tyr633, and Tyr671.

In terms of assembly, interacts with FGFR1. Interacts (via extracellular domain) with ADGRL1/LPHN1 and ADGRL3 (via olfactomedin-like domain). Post-translationally, phosphorylated in response to FGFR1 signaling, but is not a direct substrate of FGFR1 or SRC. A mutant where the Tyr phosphorylation sites have been replaced by Phe displays constitutive FGFR1-dependent activation of downstream MAP kinases. In terms of processing, N-glycosylated. Proteolytic cleavage in the juxtamembrane region gives rise to a soluble ectodomain. As to expression, detected in brain (at protein level).

The protein localises to the cell membrane. It localises to the endoplasmic reticulum membrane. The protein resides in the cytoplasmic vesicle membrane. Its subcellular location is the cytoplasm. It is found in the perinuclear region. The protein localises to the cell junction. It localises to the focal adhesion. The protein resides in the secreted. Its subcellular location is the cell projection. It is found in the neuron projection. In terms of biological role, plays a role in fibroblast growth factor-mediated signaling cascades that lead to the activation of MAP kinases. Promotes neurite outgrowth via FGFR1-mediated activation of downstream MAP kinases. Promotes an increase both in neurite number and in neurite length. May play a role in cell-cell adhesion and cell guidance via its interaction with ADGRL1/LPHN1 and ADGRL3. The chain is Leucine-rich repeat transmembrane protein FLRT1 from Mus musculus (Mouse).